The chain runs to 230 residues: Endonuclease NucS (230 aa).

It belongs to the NucS endonuclease family.

The protein resides in the cytoplasm. Functionally, cleaves both 3' and 5' ssDNA extremities of branched DNA structures. In Corynebacterium aurimucosum (strain ATCC 700975 / DSM 44827 / CIP 107346 / CN-1) (Corynebacterium nigricans), this protein is Endonuclease NucS.